A 545-amino-acid polypeptide reads, in one-letter code: Heparanase (545 aa).

The first 37 residues, 1-37, serve as a signal peptide directing secretion; that stretch reads MLACRKPGLRPPLLLLLPLLGPLGPCSPGTPAAAAPA. 64 to 66 provides a ligand contact to heparan sulfate group; that stretch reads DAN. A propeptide spans 112 to 159 (linker peptide); the sequence is PAFEERSYWLSQSNQDICKSGSIPSDVEEKLRLEWPFQEQVLLREQYQ. The cysteines at positions 129 and 181 are disulfide-linked. Residue 160–164 coordinates heparan sulfate group; that stretch reads KKFTN. 2 N-linked (GlcNAc...) asparagine glycosylation sites follow: asparagine 164 and asparagine 219. Glutamate 227 serves as the catalytic Proton donor. Heparan sulfate group is bound by residues 272–282, histidine 298, and arginine 305; that span reads QPRRNTVKMLK. Residues 290–419 form a required for heterodimerization with the heparanase 8 kDa subunit region; that stretch reads EVIDSVTWHH…LLFKKLVGNK (130 aa). Glutamate 345 (nucleophile) is an active-site residue. Residues 350–352 and 391–393 contribute to the heparan sulfate group site; these read FGG and GNY. A disulfide bond links cysteine 439 and cysteine 544. An N-linked (GlcNAc...) asparagine glycan is attached at asparagine 461. A required for transferring proheparanase to the Golgi apparatus, secretion and subsequent enzyme activity and for enhancement of PKB/AKT1 phosphorylation region spans residues 529-545; it reads FSYGFFVIRNAKVAACI.

The protein belongs to the glycosyl hydrolase 79 family. As to quaternary structure, heterodimer; heterodimer formation between the 8 kDa and the 50 kDa subunits is required for enzyme activity. Interacts with TF; the interaction, inhibited by heparin, enhances the generation of activated factor X and activates coagulation. Interacts with HRG; the interaction is enhanced at acidic pH, partially inhibits binding of HPSE to cell surface receptors and modulates its enzymatic activity. Interacts with SDC1; the interaction enhances the shedding of SDC1. Interacts with HPSE2. In terms of processing, proteolytically processed. The cleavage of the 65 kDa form leads to the generation of a linker peptide, and the 8 kDa and the 50 kDa products. The active form, the 8/50 kDa heterodimer, is resistant to degradation. Complete removal of the linker peptide appears to be a prerequisite to the complete activation of the enzyme. N-glycosylated. Glycosylation of the 50 kDa subunit appears to be essential for its solubility. In terms of tissue distribution, highly expressed in placenta and weakly in the kidney, lung, spleen and uterus.

The protein localises to the lysosome membrane. The protein resides in the secreted. It is found in the nucleus. It carries out the reaction endohydrolysis of (1-&gt;4)-beta-D-glycosidic bonds of heparan sulfate chains in heparan sulfate proteoglycan.. With respect to regulation, inhibited by laminarin sulfate and, to a lower extent, by heparin, sulfamin and EDTA. Activated by calcium and magnesium. Functionally, endoglycosidase that cleaves heparan sulfate proteoglycans (HSPGs) into heparan sulfate side chains and core proteoglycans. Participates in extracellular matrix (ECM) degradation and remodeling. Selectively cleaves the linkage between a glucuronic acid unit and an N-sulfo glucosamine unit carrying either a 3-O-sulfo or a 6-O-sulfo group. Can also cleave the linkage between a glucuronic acid unit and an N-sulfo glucosamine unit carrying a 2-O-sulfo group, but not linkages between a glucuronic acid unit and a 2-O-sulfated iduronic acid moiety. Essentially inactive at neutral pH but becomes active under acidic conditions such as during tumor invasion and in inflammatory processes. Facilitates cell migration associated with metastasis, wound healing and inflammation. Enhances shedding of syndecans. Acts as a procoagulant by enhancing the generation of activated factor X/F10 in the presence of tissue factor/TF and activated factor VII/F7. Independent of its enzymatic activity, increases cell adhesion to the extracellular matrix (ECM). Enhances AKT1/PKB phosphorylation, possibly via interaction with a lipid raft-resident receptor. Plays a role in the regulation of osteogenesis. Enhances angiogenesis through up-regulation of SRC-mediated activation of VEGF. Implicated in hair follicle inner root sheath differentiation and hair homeostasis. This chain is Heparanase (HPSE), found in Bos taurus (Bovine).